The sequence spans 368 residues: Agmatine deiminase (368 aa).

The active-site Amidino-cysteine intermediate is C357.

The protein belongs to the agmatine deiminase family. Homodimer.

It carries out the reaction agmatine + H2O = N-carbamoylputrescine + NH4(+). It functions in the pathway amine and polyamine biosynthesis; putrescine biosynthesis via agmatine pathway; N-carbamoylputrescine from agmatine: step 1/1. Functionally, mediates the hydrolysis of agmatine into N-carbamoylputrescine in the arginine decarboxylase (ADC) pathway of putrescine biosynthesis, a basic polyamine. This is Agmatine deiminase from Pseudomonas putida (strain ATCC 47054 / DSM 6125 / CFBP 8728 / NCIMB 11950 / KT2440).